The following is a 541-amino-acid chain: Beta-glucuronidase (541 aa).

Positions 1-20 are cleaved as a signal peptide; it reads MHHHPITLLSLLLGAAQSIA. Residues asparagine 69, asparagine 115, and asparagine 157 are each glycosylated (N-linked (GlcNAc...) asparagine). Catalysis depends on glutamate 208, which acts as the Proton donor. N-linked (GlcNAc...) asparagine glycosylation is found at asparagine 217, asparagine 291, and asparagine 304. Glutamate 324 (nucleophile) is an active-site residue. N-linked (GlcNAc...) asparagine glycosylation is found at asparagine 380, asparagine 426, asparagine 441, asparagine 483, and asparagine 512.

The protein belongs to the glycosyl hydrolase 79 family. N-glycosylated.

It is found in the secreted. It catalyses the reaction a beta-D-glucuronoside + H2O = D-glucuronate + an alcohol. Functionally, beta-glucuronidase that hydrolyzes beta-glucuronosyl and 4-O-methyl-beta-glucuronosyl residues of arabinogalactan-protein. Hydrolyzed heparan sulfate only very weakly. Has no activity on xylan from birchwood. Able to catalyze the transglycosylation of glucuronic acid (GlcA) residues from p-nitrophenyl-beta-glucuronic acid (PNP beta-GlcA) to various monosaccharide acceptors such as glucose, galactose and xylose. The chain is Beta-glucuronidase from Aspergillus niger (strain ATCC MYA-4892 / CBS 513.88 / FGSC A1513).